Here is a 411-residue protein sequence, read N- to C-terminus: CCA-adding enzyme (411 aa).

Residues G8 and R11 each coordinate ATP. CTP-binding residues include G8 and R11. Mg(2+)-binding residues include E21 and D23. R91, R137, and R140 together coordinate ATP. Residues R91, R137, and R140 each coordinate CTP. Residues 227–328 (LGNQTMTRLS…MTIFQAFDCW (102 aa)) form the HD domain.

The protein belongs to the tRNA nucleotidyltransferase/poly(A) polymerase family. Bacterial CCA-adding enzyme type 2 subfamily. Requires Mg(2+) as cofactor.

The catalysed reaction is a tRNA precursor + 2 CTP + ATP = a tRNA with a 3' CCA end + 3 diphosphate. It catalyses the reaction a tRNA with a 3' CCA end + 2 CTP + ATP = a tRNA with a 3' CCACCA end + 3 diphosphate. Catalyzes the addition and repair of the essential 3'-terminal CCA sequence in tRNAs without using a nucleic acid template. Adds these three nucleotides in the order of C, C, and A to the tRNA nucleotide-73, using CTP and ATP as substrates and producing inorganic pyrophosphate. tRNA 3'-terminal CCA addition is required both for tRNA processing and repair. Also involved in tRNA surveillance by mediating tandem CCA addition to generate a CCACCA at the 3' terminus of unstable tRNAs. While stable tRNAs receive only 3'-terminal CCA, unstable tRNAs are marked with CCACCA and rapidly degraded. In Blochmanniella floridana, this protein is CCA-adding enzyme.